The following is a 120-amino-acid chain: Fluoride-specific ion channel FluC 1 (120 aa).

Transmembrane regions (helical) follow at residues 3-23 (ALLTAVGAAFGALLRYCLNCA) and 42-62 (LGCLLAGALAALPLPAAVAAL). Na(+) contacts are provided by G69 and T72. Residues 99-119 (ANLAAGVGAAVLGMAAVGWFL) traverse the membrane as a helical segment.

The protein belongs to the fluoride channel Fluc/FEX (TC 1.A.43) family.

It localises to the cell membrane. The enzyme catalyses fluoride(in) = fluoride(out). With respect to regulation, na(+) is not transported, but it plays an essential structural role and its presence is essential for fluoride channel function. Fluoride-specific ion channel. Important for reducing fluoride concentration in the cell, thus reducing its toxicity. This Thermobifida fusca (strain YX) protein is Fluoride-specific ion channel FluC 1.